A 471-amino-acid chain; its full sequence is Probable pyruvate, phosphate dikinase regulatory protein, chloroplastic (471 aa).

A chloroplast-targeting transit peptide spans 1–49; that stretch reads MSSSSSTSPRFGSMISAKLASPPPSLLLPPSPRLQGRRLTPPSCTPGTP. The interval 1-133 is disordered; sequence MSSSSSTSPR…PHPSSDEAAS (133 aa). Over residues 21–32 the composition is skewed to pro residues; sequence SPPPSLLLPPSP. The segment covering 71 to 88 has biased composition (polar residues); the sequence is GSATTPRSPAQLGSSQLH. A compositionally biased stretch (basic residues) spans 89–99; that stretch reads RWSRARAHRSG. Positions 100 to 111 are enriched in basic and acidic residues; it reads RRLEWPTIRDRG. Position 171 to 178 (171 to 178) interacts with ADP; the sequence is HSVNAALG.

This sequence belongs to the pyruvate, phosphate/water dikinase regulatory protein family. PDRP subfamily.

It localises to the plastid. The protein resides in the chloroplast. It catalyses the reaction N(tele)-phospho-L-histidyl/L-threonyl-[pyruvate, phosphate dikinase] + ADP = N(tele)-phospho-L-histidyl/O-phospho-L-threonyl-[pyruvate, phosphate dikinase] + AMP + H(+). It carries out the reaction N(tele)-phospho-L-histidyl/O-phospho-L-threonyl-[pyruvate, phosphate dikinase] + phosphate + H(+) = N(tele)-phospho-L-histidyl/L-threonyl-[pyruvate, phosphate dikinase] + diphosphate. Regulated by light/dark exposure. Bifunctional serine/threonine kinase and phosphorylase involved in the dark/light-mediated regulation of PPDK by catalyzing its phosphorylation/dephosphorylation. Dark/light-induced changes in stromal concentrations of the competing ADP and Pi substrates govern the direction of the reaction. In the dark, phosphorylates the catalytic intermediate of PPDK (PPDK-HisP), inactivating it. Light exposure induces the phosphorolysis reaction that reactivates PPDK. The sequence is that of Probable pyruvate, phosphate dikinase regulatory protein, chloroplastic (PDRP1) from Oryza sativa subsp. indica (Rice).